The following is a 132-amino-acid chain: Small ribosomal subunit protein uS8 (132 aa).

The protein belongs to the universal ribosomal protein uS8 family. In terms of assembly, part of the 30S ribosomal subunit. Contacts proteins S5 and S12.

Its function is as follows. One of the primary rRNA binding proteins, it binds directly to 16S rRNA central domain where it helps coordinate assembly of the platform of the 30S subunit. This chain is Small ribosomal subunit protein uS8, found in Limosilactobacillus reuteri (strain DSM 20016) (Lactobacillus reuteri).